The sequence spans 197 residues: 7-methyl-GTP pyrophosphatase (197 aa).

Asp79 (proton acceptor) is an active-site residue.

The protein belongs to the Maf family. YceF subfamily.

Its subcellular location is the cytoplasm. It carries out the reaction N(7)-methyl-GTP + H2O = N(7)-methyl-GMP + diphosphate + H(+). Its function is as follows. Nucleoside triphosphate pyrophosphatase that hydrolyzes 7-methyl-GTP (m(7)GTP). May have a dual role in cell division arrest and in preventing the incorporation of modified nucleotides into cellular nucleic acids. In Dictyostelium discoideum (Social amoeba), this protein is 7-methyl-GTP pyrophosphatase.